A 422-amino-acid chain; its full sequence is Enolase (422 aa).

Residue Gln161 participates in (2R)-2-phosphoglycerate binding. Glu203 (proton donor) is an active-site residue. 3 residues coordinate Mg(2+): Asp240, Glu283, and Asp310. (2R)-2-phosphoglycerate contacts are provided by Lys335, Arg364, Ser365, and Lys386. Lys335 acts as the Proton acceptor in catalysis.

This sequence belongs to the enolase family. Mg(2+) serves as cofactor.

The protein resides in the cytoplasm. It localises to the secreted. The protein localises to the cell surface. It carries out the reaction (2R)-2-phosphoglycerate = phosphoenolpyruvate + H2O. It functions in the pathway carbohydrate degradation; glycolysis; pyruvate from D-glyceraldehyde 3-phosphate: step 4/5. Its function is as follows. Catalyzes the reversible conversion of 2-phosphoglycerate (2-PG) into phosphoenolpyruvate (PEP). It is essential for the degradation of carbohydrates via glycolysis. The polypeptide is Enolase (Deinococcus deserti (strain DSM 17065 / CIP 109153 / LMG 22923 / VCD115)).